The primary structure comprises 234 residues: Large ribosomal subunit protein uL1 (234 aa).

Belongs to the universal ribosomal protein uL1 family. As to quaternary structure, part of the 50S ribosomal subunit.

Binds directly to 23S rRNA. The L1 stalk is quite mobile in the ribosome, and is involved in E site tRNA release. Its function is as follows. Protein L1 is also a translational repressor protein, it controls the translation of the L11 operon by binding to its mRNA. This chain is Large ribosomal subunit protein uL1, found in Anaeromyxobacter dehalogenans (strain 2CP-C).